Reading from the N-terminus, the 81-residue chain is RNA-binding protein Hfq (81 aa).

In terms of domain architecture, Sm spans 9 to 68; it reads DPYLNILRKERVPVSIFLVNGIKLQGQIESFDQFVILLKNTVSQMVYKHAISTVVPSRTI.

Belongs to the Hfq family. In terms of assembly, homohexamer.

RNA chaperone that binds small regulatory RNA (sRNAs) and mRNAs to facilitate mRNA translational regulation in response to envelope stress, environmental stress and changes in metabolite concentrations. Also binds with high specificity to tRNAs. The sequence is that of RNA-binding protein Hfq from Marinomonas sp. (strain MWYL1).